Reading from the N-terminus, the 118-residue chain is Small ribosomal subunit protein uS13 (118 aa).

Residues 92-118 are disordered; that stretch reads RRGHPLRGQRTRTNARTRKGPRKAIRK.

This sequence belongs to the universal ribosomal protein uS13 family. As to quaternary structure, part of the 30S ribosomal subunit. Forms a loose heterodimer with protein S19. Forms two bridges to the 50S subunit in the 70S ribosome.

Functionally, located at the top of the head of the 30S subunit, it contacts several helices of the 16S rRNA. In the 70S ribosome it contacts the 23S rRNA (bridge B1a) and protein L5 of the 50S subunit (bridge B1b), connecting the 2 subunits; these bridges are implicated in subunit movement. Contacts the tRNAs in the A and P-sites. This Xanthomonas campestris pv. campestris (strain ATCC 33913 / DSM 3586 / NCPPB 528 / LMG 568 / P 25) protein is Small ribosomal subunit protein uS13.